Consider the following 244-residue polypeptide: Venom nerve growth factor 2 (244 aa).

Positions 1 to 18 (MSMLCYTLIIAFLIGTWA) are cleaved as a signal peptide. Positions 19-125 (APKSEDNVPL…TLNRNIRAKR (107 aa)) are excised as a propeptide. The span at 47–66 (GLKTSRNTDQRHPAPKKAED) shows a compositional bias: basic and acidic residues. Residues 47–67 (GLKTSRNTDQRHPAPKKAEDQ) form a disordered region. Intrachain disulfides connect C139–C205, C181–C233, and C193–C235.

This sequence belongs to the NGF-beta family. In terms of assembly, homodimer; non-covalently linked. Expressed by the venom gland.

It localises to the secreted. In terms of biological role, nerve growth factor is important for the development and maintenance of the sympathetic and sensory nervous systems. It stimulates division and differentiation of sympathetic and embryonic sensory neurons as well as basal forebrain cholinergic neurons in the brain. Its relevance in the snake venom is not clear. However, it has been shown to inhibit metalloproteinase-dependent proteolysis of platelet glycoprotein Ib alpha, suggesting a metalloproteinase inhibition to prevent metalloprotease autodigestion and/or protection against prey proteases. Binds a lipid between the two protein chains in the homodimer. The lipid-bound form promotes histamine relase from mouse mast cells, contrary to the lipid-free form. This is Venom nerve growth factor 2 from Tropidechis carinatus (Australian rough-scaled snake).